The sequence spans 61 residues: Conotoxin TeAr154 (61 aa).

The first 19 residues, 1-19, serve as a signal peptide directing secretion; that stretch reads MHCLPVFVILLLLTASGLS. Residues 20 to 47 constitute a propeptide that is removed on maturation; sequence VDARPKTEDDVPLSSFRDNTKSTLQRLL. Glu57 carries the 4-carboxyglutamate modification.

In terms of processing, contains 2 disulfide bonds that can be either 'C1-C3, C2-C4' or 'C1-C4, C2-C3', since these disulfide connectivities have been observed for conotoxins with cysteine framework V (for examples, see AC P0DQQ7 and AC P81755). Post-translationally, contains 2 disulfide bonds. In terms of tissue distribution, expressed by the venom duct.

The protein localises to the secreted. This is Conotoxin TeAr154 from Conus textile (Cloth-of-gold cone).